We begin with the raw amino-acid sequence, 91 residues long: Small ribosomal subunit protein uS17 (91 aa).

This sequence belongs to the universal ribosomal protein uS17 family. As to quaternary structure, part of the 30S ribosomal subunit.

In terms of biological role, one of the primary rRNA binding proteins, it binds specifically to the 5'-end of 16S ribosomal RNA. This Malacoplasma penetrans (strain HF-2) (Mycoplasma penetrans) protein is Small ribosomal subunit protein uS17.